The sequence spans 683 residues: Dixin (683 aa).

Leucine 2 carries N-myristoyl glycine lipidation. The region spanning 20–127 (EQQLQAYVAW…LVLALAAHFK (108 aa)) is the Calponin-homology (CH) domain. The actin-binding stretch occupies residues 127–300 (KPGSSRTVNQ…LEKEMEEAKK (174 aa)). Serine 186 is subject to Phosphoserine. Positions 207–235 (GQQRSPSESSCSSLTSPSPIHSAKSESII) are disordered. Low complexity predominate over residues 211 to 228 (SPSESSCSSLTSPSPIHS). Serine 231 bears the Phosphoserine mark. Residues 279–452 (SWEEQLLEQQ…EALRKLSDVS (174 aa)) adopt a coiled-coil conformation. Positions 482–492 (NYNSHNSQSNG) are enriched in polar residues. Disordered stretches follow at residues 482-509 (NYNS…SNRG) and 556-594 (TQKK…QSSP). A Phosphoserine modification is found at serine 590. Positions 600–680 (CTKVLYFTDR…KIVAWVEEDH (81 aa)) constitute a DIX domain.

The protein belongs to the DIXDC1 family. As to quaternary structure, isoform 1 but not isoform 2 binds filamentous actin. Interacts with the complex composed of DVL2 and Rac. Interacts with AXIN1; competes with MAP3K1. Interacts with MAP3K4 preventing MAP3K4 interaction with AXIN1. Directly interacts (via DIX domain) with DVL2 (via DIX domain). Interacts with gamma-tubulin. In terms of processing, phosphorylated on tyrosine and serine residues. Polyubiquitinated, leading to its proteasomal degradation. WNT3A signaling increases DIXDC1 protein levels by inhibiting its ubiquitination and subsequent degradation. Ubiquitously expressed with higher expression in cardiac and skeletal muscles.

The protein resides in the cell junction. The protein localises to the focal adhesion. Its subcellular location is the cytoplasm. It is found in the cytoskeleton. It localises to the stress fiber. Positive effector of the Wnt signaling pathway; activates WNT3A signaling via DVL2. Regulates JNK activation by AXIN1 and DVL2. This Homo sapiens (Human) protein is Dixin (DIXDC1).